A 110-amino-acid polypeptide reads, in one-letter code: Iron-sulfur cluster assembly protein CyaY (110 aa).

The protein belongs to the frataxin family.

In terms of biological role, involved in iron-sulfur (Fe-S) cluster assembly. May act as a regulator of Fe-S biogenesis. The protein is Iron-sulfur cluster assembly protein CyaY of Pseudomonas fluorescens (strain SBW25).